Reading from the N-terminus, the 447-residue chain is GTPase Der (447 aa).

EngA-type G domains are found at residues 4 to 165 (QIIT…PEEE) and 180 to 357 (LQIV…KIWN). Residues 10–17 (GRPNVGKS), 57–61 (DTPGL), 119–122 (NKCE), 186–193 (GRPNAGKS), 233–237 (DTAGL), and 298–301 (NKWD) contribute to the GTP site. Residues 358–443 (KKITTSKLNE…PIRFTYVKTK (86 aa)) form the KH-like domain.

Belongs to the TRAFAC class TrmE-Era-EngA-EngB-Septin-like GTPase superfamily. EngA (Der) GTPase family. In terms of assembly, associates with the 50S ribosomal subunit.

Its function is as follows. GTPase that plays an essential role in the late steps of ribosome biogenesis. The sequence is that of GTPase Der from Rickettsia rickettsii (strain Sheila Smith).